The primary structure comprises 340 residues: NADH-quinone oxidoreductase subunit H (340 aa).

Transmembrane regions (helical) follow at residues 4-24, 78-98, 113-133, 151-171, 184-204, 244-264, 273-293, and 316-336; these read TIGI…PLLI, YLFV…WAVI, VLYL…AGWA, VSYE…AGSM, MLHW…ISGI, SMIL…LSPF, IFFI…FLFV, and VLIP…VAHV.

Belongs to the complex I subunit 1 family. In terms of assembly, NDH-1 is composed of 14 different subunits. Subunits NuoA, H, J, K, L, M, N constitute the membrane sector of the complex.

Its subcellular location is the cell inner membrane. The enzyme catalyses a quinone + NADH + 5 H(+)(in) = a quinol + NAD(+) + 4 H(+)(out). NDH-1 shuttles electrons from NADH, via FMN and iron-sulfur (Fe-S) centers, to quinones in the respiratory chain. The immediate electron acceptor for the enzyme in this species is believed to be ubiquinone. Couples the redox reaction to proton translocation (for every two electrons transferred, four hydrogen ions are translocated across the cytoplasmic membrane), and thus conserves the redox energy in a proton gradient. This subunit may bind ubiquinone. The sequence is that of NADH-quinone oxidoreductase subunit H from Legionella pneumophila subsp. pneumophila (strain Philadelphia 1 / ATCC 33152 / DSM 7513).